The chain runs to 109 residues: uncharacterized protein (109 aa).

A helical transmembrane segment spans residues methionine 75 to valine 95.

It is found in the membrane. This is an uncharacterized protein from Saccharomyces cerevisiae (strain ATCC 204508 / S288c) (Baker's yeast).